The sequence spans 134 residues: Small ribosomal subunit protein uS9 (134 aa).

A disordered region spans residues 113–134; that stretch reads REVERKKYGLKKARRAPQFSKR. The span at 120-134 shows a compositional bias: basic residues; that stretch reads YGLKKARRAPQFSKR.

It belongs to the universal ribosomal protein uS9 family.

This chain is Small ribosomal subunit protein uS9 (rpsI), found in Thermotoga maritima (strain ATCC 43589 / DSM 3109 / JCM 10099 / NBRC 100826 / MSB8).